Here is a 126-residue protein sequence, read N- to C-terminus: Large ribosomal subunit protein bL20c (126 aa).

It belongs to the bacterial ribosomal protein bL20 family.

The protein localises to the plastid. It localises to the chloroplast. Binds directly to 23S ribosomal RNA and is necessary for the in vitro assembly process of the 50S ribosomal subunit. It is not involved in the protein synthesizing functions of that subunit. The chain is Large ribosomal subunit protein bL20c from Pelargonium hortorum (Common geranium).